The following is a 2896-amino-acid chain: NLIRKDVDALSEDEVLNLQVALRAMQDDETPTGYQAIAAYHGEPADCKAPDGSTVVCCLHGMPTFPLWHRLYTVQFEQTMVAHGSKLGVPYWDWTQPLNHLPELVSHPLFMDPTAHKAKKNVFYSGDIAFEKKTTARAVDTRLFQASKGGKNFLLEGVLSALEQDDYCHFEVQFEVAHNPIHYLVGGRFTHSMSSLEYTSYDPLFFLHHSNVERLFTIWQALQKHRGLDGNANCGLNMFHKPMEPFGRDTNPISLTKEHAKAVDVFNYNELGYDYDDLHLNGMDIPELDTMLKERQQHPRSFANFRLGGIKTSANVRVAVCIPSEDKRHSDNCNNHVGSFFILGGVHEMTWDFGYPFLFEITDVVKSLGIPLDGNYYVHADVTEINGTLLPDGTIPRPTVSYIPHNFKDADMVVVDKTGLNVRKDLQSLTTEEEYELRVAMERFMDDKSIDGYQALAEFHGLPAKCPEPDAINRVACCVHGMSTFPHWHRLVVMQFEDALLARGSPIGVPYWDWTTPSSSLPHLVAVETYEDPYTKEVKPNPFYHAQIEFLHNDVFTARNVDSRLFEKPTKGHHGYLHDGMLLAFEQEDFCDFEVQFEVTHNAIHAWVGGNEPYSMSSLHYTSFDPLFWLHHSQVDRLWAVWQALQIYRGKPYKPYCALSEVHRPLKPFAFEPPLNNNKHTHSHSVPTHVYDYQSDLHYTYDTLFFGGMSVRELQRHIEEDKAKDRVFVGFLLMGIKTSANVVINVESAGNTYMAGTITILGGSKEMEWRFDRLYKYEITDALAELGVDMHAEYSINLQINDINGTALPPTSIPDPIVIFSPGKKESGVVFDELYRSRRDVSSLTDADMNALRKALQAYEDDKDASGYQQVAAFHGSTKWCPSPDAEVKYACCHHGMATFPHWHRLLTVNFENGLRHNGYQNGIPYWDWTRPLSELPTLVKDETYADENGETHPNPFFSGVIDEIGEHTTRSPNPTLFLKPPFGHFTPLGDEVMYALEQEDFCSFEVQFEIAHNHIHALVGGTEPYSMSSLEYTTFDPIFILHHSNVDRIWAIWQALQKFRGHRYNSANCAIETLRKPMSPFSLTSDINIDPMTREHSVPFDVFDYKKNFHYEYDLLELNGLSIPQLHREISRRRAKSRIFATFMLEGIKQSALVEYYIRAHGSTDQLKAGEFYILGSANEMPWKFDRVYKADITQQMKEANLHFNDQYHIEYHLKDLSGNEIAGVHLETAIIYEPGLGNFGEAGIWVEPVTSANRIRKNLNALTDGDMESLRKAFKDMTTDGRYEEIASFHGLPAQCPNKDGSKVYTCCIHGMPTFPHWHRLYVALVENELLARGSGVAVPYWDWVQPFDHLPALVNRATYYNSRTLLVEPNPFFKGKISFLNSETNRDPQEELFGNKYLYEHTLFVLEQTDFCDFEVHFEVLHNTIHSWLGGRDPHSMSSLDFAAYDPIFFLHHSNIDRIWAIWQELQRYRKLPYNEANCALPLLNVPMRPFSNTTANHDRMTLTHSAPNDVFDYQNVLHYKYDTLSFYDLTITQLDHLIEERKSHDRIFAGFLLHGVQASADIHVFICVPTSKHEENCAHDVGVFSVLGGKSEMPWQFASVFQYEITDQLKLLGLNQNSHFRGVTEVTAVNGSSINSDIFPHPTIIYVPKQDHSADIKSEEGNEYLVRKNVERLSLSEMNSLIHAFRRMQRDKSSDGFEAIASFHALPPLCPSPTAKHRHACCLHGMATFPHWHRLYVVQFEQALHRHGATVGVPYWDWTRPISKIPDFIASKRYSDPFTKIEDYNPFNQGQISFISEDTETKREVSEYLFEHPVLGKQTWLFDNIALALEQTDYCDFEIQLEIVHNAIHSWIGGKEEHSLNHLHYAAYDPIFYLHHSNVDRLWVIWQELQKLRGLNAYESHCALELMKVPLKPFSFGAPYNLNDLTTKLSKPEDMFRYKDNFHYEYDILDINSMSINQIESSYIRHQRDHDRVFAGFLLSGFGSSAYATFEICIEGGECHEGSHFSVLGGSTEMPWAFDRLYKIEITDILSDMNLAFDSAFTIKTKLVAQNGTELPASILPEATVIRIPPSNEDADIDTPLNHIRRNVESLDERDIQNLMAALTRVKEDESDHGFQTIASYHGSTLCPSPEEPKYACCLHGMPVFPHWHRVYLLHFEDSMRRHGSSVATPYWDWTQPGTKLPRLLADSDYYDAWTDNVTENPFLRGYIKTEDTYTVRDVKPELFEIGGGEGSTLYQQVLLMLEQEDYCDFEVQFEVVHNSIHYLVGGHQKYAMSSLVYSSFDPIFYVHHSMVDRLWAIWQALQEHRHLPFDKAYCALEQLSFPMKPFVWESNPNLHTRAASTPQHLFDDNKLGYKYDNLEFHGMNIDQLENAIHKQQNKDRVFASFLLFGIKTSADVHLKLCKDETCEDAGVVFILGGDNEMPWHFDRTYKKDITHVLHQMHIPLEDLYVHGSTILLEVEIETVDGKVLDSSSLPAPSMIYVPAKDFKREVHKKTVGDAIIRKNVNSLTPSDIKELRDAMAKVQADTSDNGYQKIASYHGIPLSCHYENGTAYACCQHGMVTFPNWHRLLTKQMEDALVAKGSHVGIPYWDWTTTFANLPVLVTEEKDNSFHHAHIDVANTDTTRSPRAQLFDDPDKGDKSFFYRQIALALEQTDFCDFEIQFEIGHNAIHSWVGGSSPYGMSTLHYTSYDPLFYLHHSNTDRIWSVWQALQKYRGLPYNTANCEINKLVKPLKPFNLDTNPNAVTKAHSTGATSFDYHKLGYDYDNLNFHGMTIPELEEHLKEIQHEDRVFAGFLLRTIGQSADVNFDVCTKDGECTFGGTFCILGGEHEMFWAFDRPFKYDITTSLKHLRLDAHDDFDIKVTIKGIDGHVLSNKYLSPPTVFLAPAKTTH.

The segment at Asn1 to Gly419 is functional unit Oda. His41 serves as a coordination point for Cu cation. Cys47 and Cys57 are disulfide-bonded. Residues Cys58–His60 constitute a cross-link (2'-(S-cysteinyl)-histidine (Cys-His)). His60, His69, His178, His182, and His209 together coordinate Cu cation. Cystine bridges form between Cys168–Cys234 and Cys321–Cys333. N-linked (GlcNAc...) asparagine glycosylation occurs at Asn386. Residues Leu420–Leu834 are functional unit Odb. Cu cation is bound at residue His460. Residues Cys466 and Cys477 are joined by a disulfide bond. Positions Cys478–His480 form a cross-link, 2'-(S-cysteinyl)-histidine (Cys-His). Residues His480, His489, His601, His605, and His632 each contribute to the Cu cation site. Cys591 and Cys657 are joined by a disulfide. Asn804 carries an N-linked (GlcNAc...) asparagine glycan. The segment at Tyr835 to Ala1254 is functional unit Odc. Cu cation is bound at residue His875. Cys881 and Cys892 are oxidised to a cystine. Residues Cys893–His895 constitute a cross-link (2'-(S-cysteinyl)-histidine (Cys-His)). His895, His904, His1013, His1017, His1044, and His1292 together coordinate Cu cation. A disulfide bond links Cys1003 and Cys1070. The functional unit Odd stretch occupies residues Asn1255–Glu1667. The cysteines at positions 1298 and 1309 are disulfide-linked. A cross-link (2'-(S-cysteinyl)-histidine (Cys-His)) is located at residues Cys1310–His1312. Residues His1312, His1321, His1425, His1429, and His1456 each contribute to the Cu cation site. Cys1415 and Cys1482 are disulfide-bonded. A glycan (N-linked (GlcNAc...) asparagine) is linked at Asn1496. Residues Cys1571 and Cys1581 are joined by a disulfide bond. N-linked (GlcNAc...) asparagine glycosylation occurs at Asn1634. Positions Tyr1668–Leu2085 are functional unit Ode. His1708 provides a ligand contact to Cu cation. A disulfide bridge connects residues Cys1714 and Cys1725. Positions Cys1726–His1728 form a cross-link, 2'-(S-cysteinyl)-histidine (Cys-His). Positions 1728, 1737, 1849, 1853, and 1880 each coordinate Cu cation. Intrachain disulfides connect Cys1839/Cys1906 and Cys1997/Cys2003. Residue Asn2055 is glycosylated (N-linked (GlcNAc...) asparagine). Residues Asn2086–Asp2502 are functional unit Odf. His2126 provides a ligand contact to Cu cation. A disulfide bridge connects residues Cys2131 and Cys2141. Residues Cys2142–His2144 constitute a cross-link (2'-(S-cysteinyl)-histidine (Cys-His)). Cu cation contacts are provided by His2144 and His2153. A glycan (N-linked (GlcNAc...) asparagine) is linked at Asn2201. 2 disulfide bridges follow: Cys2252/Cys2319 and Cys2406/Cys2411. Cu cation-binding residues include His2262, His2266, and His2293. The tract at residues Ala2503–His2896 is functional unit Odg. A Cu cation-binding site is contributed by His2543. Cys2549 and Cys2559 form a disulfide bridge. Asn2553 is a glycosylation site (N-linked (GlcNAc...) asparagine). Residues Cys2560–His2562 constitute a cross-link (2'-(S-cysteinyl)-histidine (Cys-His)). The Cu cation site is built by His2562, His2571, His2671, His2675, and His2702. 2 disulfides stabilise this stretch: Cys2661–Cys2728 and Cys2815–Cys2821.

This sequence belongs to the tyrosinase family. Hemocyanin subfamily. As to quaternary structure, decamers of large identical subunits (350 kDa), each containing 7 globular oxygen-binding functional units: ODA, ODB, ODC, ODD, ODE, ODF, and ODG. Decamer formation requires the presence of magnesium ions. Cu(2+) is required as a cofactor.

In terms of biological role, hemocyanins are copper-containing oxygen carriers occurring freely dissolved in the hemolymph of many mollusks and arthropods. The polypeptide is Hemocyanin G-type, units Oda to Odg (ODHCY) (Enteroctopus dofleini (North Pacific giant octopus)).